A 277-amino-acid polypeptide reads, in one-letter code: Pantothenate synthetase (277 aa).

An ATP-binding site is contributed by 26 to 33; sequence MGNLHEGH. His-33 acts as the Proton donor in catalysis. Gln-57 is a (R)-pantoate binding site. Gln-57 contributes to the beta-alanine binding site. 144–147 lines the ATP pocket; it reads GKKD. Gln-150 lines the (R)-pantoate pocket. Residues Val-173 and 181–184 each bind ATP; that span reads LSSR.

This sequence belongs to the pantothenate synthetase family. As to quaternary structure, homodimer.

Its subcellular location is the cytoplasm. The catalysed reaction is (R)-pantoate + beta-alanine + ATP = (R)-pantothenate + AMP + diphosphate + H(+). It functions in the pathway cofactor biosynthesis; (R)-pantothenate biosynthesis; (R)-pantothenate from (R)-pantoate and beta-alanine: step 1/1. In terms of biological role, catalyzes the condensation of pantoate with beta-alanine in an ATP-dependent reaction via a pantoyl-adenylate intermediate. This is Pantothenate synthetase from Paraburkholderia phymatum (strain DSM 17167 / CIP 108236 / LMG 21445 / STM815) (Burkholderia phymatum).